The primary structure comprises 99 residues: PE-PGRS family protein PE25 (99 aa).

Residues 1 to 92 enclose the PE domain; that stretch reads MSFVITNPEA…GADKYATAEA (92 aa). Ser-2 is subject to N-acetylserine.

The protein belongs to the mycobacterial PE family. As to quaternary structure, forms a heterodimer with PPE41. The dimer forms a 1:1:1 heterotrimeric complex with EspG5. Interacts with PPE51.

The protein localises to the secreted. Its function is as follows. The PE25/PPE41 dimer induces both a strong humoral and cellular immune response. PE25 protein alone induces low response. The dimer induces necrosis, but not apoptosis, in mouse macrophage cells. It also induces activation and maturation of mouse dendritic cells and drives Th2-biased immune responses. The chain is PE-PGRS family protein PE25 from Mycobacterium tuberculosis (strain ATCC 25618 / H37Rv).